A 577-amino-acid chain; its full sequence is Urease subunit alpha (577 aa).

Positions 136–577 constitute a Urease domain; it reads GTVDCHVHLI…LPMTQRYFLF (442 aa). Residues His141, His143, and Lys224 each contribute to the Ni(2+) site. The residue at position 224 (Lys224) is an N6-carboxylysine. Substrate is bound at residue His226. Positions 253 and 279 each coordinate Ni(2+). The active-site Proton donor is His327. Asp367 contacts Ni(2+).

The protein belongs to the metallo-dependent hydrolases superfamily. Urease alpha subunit family. As to quaternary structure, heterotrimer of UreA (gamma), UreB (beta) and UreC (alpha) subunits. Three heterotrimers associate to form the active enzyme. Requires Ni cation as cofactor. Carboxylation allows a single lysine to coordinate two nickel ions.

It localises to the cytoplasm. The enzyme catalyses urea + 2 H2O + H(+) = hydrogencarbonate + 2 NH4(+). Its pathway is nitrogen metabolism; urea degradation; CO(2) and NH(3) from urea (urease route): step 1/1. This Mycobacterium bovis (strain ATCC BAA-935 / AF2122/97) protein is Urease subunit alpha.